The sequence spans 121 residues: Large ribosomal subunit protein bL12 (121 aa).

This sequence belongs to the bacterial ribosomal protein bL12 family. Homodimer. Part of the ribosomal stalk of the 50S ribosomal subunit. Forms a multimeric L10(L12)X complex, where L10 forms an elongated spine to which 2 to 4 L12 dimers bind in a sequential fashion. Binds GTP-bound translation factors.

Its function is as follows. Forms part of the ribosomal stalk which helps the ribosome interact with GTP-bound translation factors. Is thus essential for accurate translation. The chain is Large ribosomal subunit protein bL12 from Klebsiella pneumoniae (strain 342).